We begin with the raw amino-acid sequence, 155 residues long: Ribosome maturation factor RimP (155 aa).

It belongs to the RimP family.

The protein resides in the cytoplasm. Its function is as follows. Required for maturation of 30S ribosomal subunits. In Staphylococcus saprophyticus subsp. saprophyticus (strain ATCC 15305 / DSM 20229 / NCIMB 8711 / NCTC 7292 / S-41), this protein is Ribosome maturation factor RimP.